Reading from the N-terminus, the 283-residue chain is Elongation factor Ts (283 aa).

Positions 80 to 83 (TDFV) are involved in Mg(2+) ion dislocation from EF-Tu.

This sequence belongs to the EF-Ts family.

The protein resides in the cytoplasm. Associates with the EF-Tu.GDP complex and induces the exchange of GDP to GTP. It remains bound to the aminoacyl-tRNA.EF-Tu.GTP complex up to the GTP hydrolysis stage on the ribosome. The polypeptide is Elongation factor Ts (Haemophilus influenzae (strain PittEE)).